A 402-amino-acid polypeptide reads, in one-letter code: Deacetylase Oant_2987 (402 aa).

H70, H72, K168, H201, H224, and D284 together coordinate Zn(2+). An N6-carboxylysine modification is found at K168.

This sequence belongs to the metallo-dependent hydrolases superfamily. Atu3266/EF_0837 deacetylase family. It depends on Zn(2+) as a cofactor.

In terms of biological role, esterase that catalyzes the deacetylation of acetyl-(R)-mandelate (in vitro). Can also hydrolyze acetyl glycolate, but with lower efficiency. Has very low N-acetyl-D-amino acid deacetylase activity with N-acetyl-D-serine and N-acetyl-D-threonine (in vitro). Theoretical substrate docking studies suggest that other N-acetylated amino acids may optimally occupy the active site and may in fact be the physiological substrates. This is Deacetylase Oant_2987 from Brucella anthropi (strain ATCC 49188 / DSM 6882 / CCUG 24695 / JCM 21032 / LMG 3331 / NBRC 15819 / NCTC 12168 / Alc 37) (Ochrobactrum anthropi).